The sequence spans 158 residues: GTP-dependent dephospho-CoA kinase (158 aa).

Residues Asp35, Val36, Asp54, Lys56, Glu109, and Asp132 each contribute to the GTP site.

The protein belongs to the GTP-dependent DPCK family.

It catalyses the reaction 3'-dephospho-CoA + GTP = GDP + CoA + H(+). The protein operates within cofactor biosynthesis; coenzyme A biosynthesis. In terms of biological role, catalyzes the GTP-dependent phosphorylation of the 3'-hydroxyl group of dephosphocoenzyme A to form coenzyme A (CoA). The protein is GTP-dependent dephospho-CoA kinase of Methanococcus vannielii (strain ATCC 35089 / DSM 1224 / JCM 13029 / OCM 148 / SB).